Consider the following 320-residue polypeptide: 1,5-anhydro-D-fructose reductase (320 aa).

Tyr40 (proton donor) is an active-site residue. Position 102 (His102) interacts with substrate. NADP(+)-binding positions include Gln194 and Ile265–Asn277.

The protein belongs to the aldo/keto reductase family. In terms of assembly, monomer.

It localises to the cytoplasm. The catalysed reaction is 1,5-anhydro-D-glucitol + NADP(+) = 1,5-anhydro-D-fructose + NADPH + H(+). With respect to regulation, inhibited by p-chloromercuribenzoic acid and alkyliodines. Functionally, catalyzes the NADPH-dependent reduction of 1,5-anhydro-D-fructose (AF) to 1,5-anhydro-D-glucitol. This is 1,5-anhydro-D-fructose reductase (AKR1E2) from Macaca fascicularis (Crab-eating macaque).